The chain runs to 338 residues: Heat-inducible transcription repressor HrcA (338 aa).

The protein belongs to the HrcA family.

In terms of biological role, negative regulator of class I heat shock genes (grpE-dnaK-dnaJ and groELS operons). Prevents heat-shock induction of these operons. This chain is Heat-inducible transcription repressor HrcA, found in Streptomyces avermitilis (strain ATCC 31267 / DSM 46492 / JCM 5070 / NBRC 14893 / NCIMB 12804 / NRRL 8165 / MA-4680).